Here is a 138-residue protein sequence, read N- to C-terminus: Spermidine export protein MdtJ (138 aa).

4 helical membrane-spanning segments follow: residues Met-1 to Met-21, Val-30 to Ala-50, Val-54 to Phe-74, and Glu-81 to Ile-101.

This sequence belongs to the drug/metabolite transporter (DMT) superfamily. Small multidrug resistance (SMR) (TC 2.A.7.1) family. MdtJ subfamily. In terms of assembly, forms a complex with MdtI.

Its subcellular location is the cell inner membrane. Catalyzes the excretion of spermidine. The polypeptide is Spermidine export protein MdtJ (Photorhabdus laumondii subsp. laumondii (strain DSM 15139 / CIP 105565 / TT01) (Photorhabdus luminescens subsp. laumondii)).